Here is a 271-residue protein sequence, read N- to C-terminus: Aquaporin-1 (271 aa).

At 1-11 the chain is on the cytoplasmic side; the sequence is MASEFKKKLFW. The helical transmembrane segment at 12–29 threads the bilayer; the sequence is RAVVAEFLAMILFIFISI. Over 30–48 the chain is Extracellular; it reads GSALGFHYPIKSNQTTGAV. N-linked (GlcNAc...) asparagine glycosylation is present at asparagine 42. Residues 49–67 traverse the membrane as a helical segment; that stretch reads QDNVKVSLAFGLSIATLAQ. The Cytoplasmic portion of the chain corresponds to 68 to 70; that stretch reads SVG. An intramembrane segment occupies 71–84; that stretch reads HISGAHLNPAVTLG. The NPA 1 motif lies at 78-80; the sequence is NPA. The Cytoplasmic portion of the chain corresponds to 85 to 92; it reads LLLSCQIS. Residues 93 to 111 traverse the membrane as a helical segment; that stretch reads VLRAIMYIIAQCVGAIVAT. Residues 112–135 are Extracellular-facing; that stretch reads AILSGITSSLPDNSLGLNALAPGV. Residues 136–155 form a helical membrane-spanning segment; it reads NSGQGLGIEIIGTLQLVLCV. Residues 156-165 are Cytoplasmic-facing; it reads LATTDRRRRD. A helical membrane pass occupies residues 166–183; the sequence is LGGSGPLAIGFSVALGHL. The Extracellular segment spans residues 184–188; it reads LAIDY. The stretch at 189 to 201 is an intramembrane region; sequence TGCGINPARSFGS. Positions 194–196 match the NPA 2 motif; that stretch reads NPA. Topologically, residues 202–208 are extracellular; it reads SVITHNF. Residues 209–226 form a helical membrane-spanning segment; it reads QDHWIFWVGPFIGAALAV. Topologically, residues 227 to 271 are cytoplasmic; that stretch reads LIYDFILAPRSSDLTDRVKVWTSGQVEEYDLDADDINSRVEMKPK. Serine 249 carries the post-translational modification Phosphoserine. At tyrosine 255 the chain carries Phosphotyrosine. Serine 264 is subject to Phosphoserine.

It belongs to the MIP/aquaporin (TC 1.A.8) family. In terms of assembly, homotetramer; each monomer provides an independent water pore. Component of the ankyrin-1 complex in the erythrocyte, composed of ANK1, RHCE, RHAG, SLC4A1, EPB42, GYPA, GYPB and AQP1. Interacts with EPHB2; involved in endolymph production in the inner ear. Identified in a complex with STOM. Interacts (via the N-terminal) with ANK1 (via ANK 1-5 repeats). Interacts (via the C-terminal) with EPB42.

It is found in the cell membrane. The enzyme catalyses H2O(in) = H2O(out). It catalyses the reaction nitric oxide(out) = nitric oxide(in). It carries out the reaction CO2(out) = CO2(in). The catalysed reaction is glycerol(in) = glycerol(out). The enzyme catalyses H2O2(out) = H2O2(in). It catalyses the reaction K(+)(in) = K(+)(out). It carries out the reaction Na(+)(in) = Na(+)(out). Forms a water channel that facilitates the transport of water across cell membranes, playing a crucial role in water homeostasis in various tissues. Could also be permeable to small solutes including hydrogen peroxide, glycerol and gases such as amonnia (NH3), nitric oxide (NO) and carbon dioxide (CO2). Recruited to the ankyrin-1 complex, a multiprotein complex of the erythrocyte membrane, it could be part of a CO2 metabolon, linking facilitated diffusion of CO2 across the membrane, anion exchange of Cl(-)/HCO3(-) and interconversion of dissolved CO2 and carbonic acid in the cytosol. In vitro, it shows non-selective gated cation channel activity and may be permeable to cations like K(+) and Na(+) in vivo. The sequence is that of Aquaporin-1 from Bos taurus (Bovine).